We begin with the raw amino-acid sequence, 36 residues long: Photosystem II reaction center protein Y (36 aa).

The Lumenal portion of the chain corresponds to 1-4 (MDTR). Residues 5–23 (LIVIAAPVLVAASWALFNI) form a helical membrane-spanning segment. Residues 24 to 36 (GRLAIQQIQRLKR) lie on the Stromal side of the membrane.

It belongs to the PsbY family. In terms of assembly, PSII is composed of 1 copy each of membrane proteins PsbA, PsbB, PsbC, PsbD, PsbE, PsbF, PsbH, PsbI, PsbJ, PsbK, PsbL, PsbM, PsbT, PsbX, PsbY, PsbZ, Psb30/Ycf12, at least 3 peripheral proteins of the oxygen-evolving complex and a large number of cofactors. It forms dimeric complexes.

The protein resides in the plastid. Its subcellular location is the chloroplast thylakoid membrane. Its function is as follows. Loosely associated component of the core of photosystem II (PSII), it is not always seen in crystals. PSII is a light-driven water plastoquinone oxidoreductase, using light energy to abstract electrons from H(2)O, generating a proton gradient subsequently used for ATP formation. The chain is Photosystem II reaction center protein Y from Phaeodactylum tricornutum (strain CCAP 1055/1).